Here is a 283-residue protein sequence, read N- to C-terminus: Eukaryotic translation initiation factor 3 subunit K (283 aa).

The PCI domain occupies 52-263; sequence YDLLANLAIL…EIKATVIREE (212 aa). Residues 114–135 form a disordered region; the sequence is EATTTDADNAGSLSGDDDDDEV.

Belongs to the eIF-3 subunit K family. In terms of assembly, component of the eukaryotic translation initiation factor 3 (eIF-3) complex.

The protein resides in the cytoplasm. Its function is as follows. Component of the eukaryotic translation initiation factor 3 (eIF-3) complex, which is involved in protein synthesis of a specialized repertoire of mRNAs and, together with other initiation factors, stimulates binding of mRNA and methionyl-tRNAi to the 40S ribosome. The eIF-3 complex specifically targets and initiates translation of a subset of mRNAs involved in cell proliferation. The protein is Eukaryotic translation initiation factor 3 subunit K of Mycosarcoma maydis (Corn smut fungus).